The following is a 66-amino-acid chain: Large ribosomal subunit protein bL31 (66 aa).

Zn(2+) contacts are provided by C16, C18, C36, and C39.

This sequence belongs to the bacterial ribosomal protein bL31 family. Type A subfamily. As to quaternary structure, part of the 50S ribosomal subunit. Zn(2+) is required as a cofactor.

Binds the 23S rRNA. This chain is Large ribosomal subunit protein bL31, found in Bacillus licheniformis (strain ATCC 14580 / DSM 13 / JCM 2505 / CCUG 7422 / NBRC 12200 / NCIMB 9375 / NCTC 10341 / NRRL NRS-1264 / Gibson 46).